A 611-amino-acid polypeptide reads, in one-letter code: Dihydroxy-acid dehydratase (611 aa).

Residue Asp81 participates in Mg(2+) binding. [2Fe-2S] cluster is bound at residue Cys122. The Mg(2+) site is built by Asp123 and Lys124. Lys124 carries the N6-carboxylysine modification. Cys195 lines the [2Fe-2S] cluster pocket. Glu491 is a binding site for Mg(2+). The active-site Proton acceptor is the Ser517.

The protein belongs to the IlvD/Edd family. As to quaternary structure, homodimer. It depends on [2Fe-2S] cluster as a cofactor. Mg(2+) serves as cofactor.

The enzyme catalyses (2R)-2,3-dihydroxy-3-methylbutanoate = 3-methyl-2-oxobutanoate + H2O. It carries out the reaction (2R,3R)-2,3-dihydroxy-3-methylpentanoate = (S)-3-methyl-2-oxopentanoate + H2O. Its pathway is amino-acid biosynthesis; L-isoleucine biosynthesis; L-isoleucine from 2-oxobutanoate: step 3/4. It functions in the pathway amino-acid biosynthesis; L-valine biosynthesis; L-valine from pyruvate: step 3/4. In terms of biological role, functions in the biosynthesis of branched-chain amino acids. Catalyzes the dehydration of (2R,3R)-2,3-dihydroxy-3-methylpentanoate (2,3-dihydroxy-3-methylvalerate) into 2-oxo-3-methylpentanoate (2-oxo-3-methylvalerate) and of (2R)-2,3-dihydroxy-3-methylbutanoate (2,3-dihydroxyisovalerate) into 2-oxo-3-methylbutanoate (2-oxoisovalerate), the penultimate precursor to L-isoleucine and L-valine, respectively. In Actinobacillus pleuropneumoniae serotype 5b (strain L20), this protein is Dihydroxy-acid dehydratase.